Reading from the N-terminus, the 297-residue chain is MAYNWWVIRVLCNKSLEEVIFWRLDSFGCRGTASQIQGKNCLVLAYLPEEQTQLLDLSALSLNFRQDALCMNFPVPIMDWYLIEEEDWASSWKQYWQPQEIGDHFLIHPAWLDLPEQSDKIILRLDPGAAFGTGTHPTTQLCLESLEMRLGLEPHPEAIIADIGCGSGILSIGAALLGVHQIYAVDIDPLAIRSTINNGKLNQIKAEKLIVEQGDIKKLIKLCPKPVDGIVCNILAEVIIDIIPHLTAIAKPKTWGIISGILLEQAKLIGDTLEQNGWVVATLWKKEEWCCFNIRYS.

S-adenosyl-L-methionine-binding residues include Thr-139, Gly-164, Asp-186, and Asn-233.

It belongs to the methyltransferase superfamily. PrmA family.

The protein resides in the cytoplasm. The catalysed reaction is L-lysyl-[protein] + 3 S-adenosyl-L-methionine = N(6),N(6),N(6)-trimethyl-L-lysyl-[protein] + 3 S-adenosyl-L-homocysteine + 3 H(+). Functionally, methylates ribosomal protein L11. This is Ribosomal protein L11 methyltransferase from Trichodesmium erythraeum (strain IMS101).